The chain runs to 33 residues: Mu-theraphotoxin-Os1a (33 aa).

3 cysteine pairs are disulfide-bonded: Cys-2–Cys-17, Cys-9–Cys-22, and Cys-16–Cys-29. Leu-33 carries the leucine amide modification.

Belongs to the neurotoxin 10 (Hwtx-1) family. 14 (Hntx-1) subfamily. Monomer. In terms of tissue distribution, expressed by the venom gland.

The protein localises to the secreted. In terms of biological role, potently and reversibly inhibits some human voltage-gated sodium channels (Nav1.1/SCN1A (IC(50)=72.0 nM), Nav1.2/SCN2A (IC(50)=75.5 nM), Nav1.6/SCN8A (IC(50)=115.0 nM), Nav1.7/SCN9A (IC(50)=52.7-129.5 nM), Nav1.3/SCN3A (IC(50)=306.6 nM)). The hNav1.7/SCN9A channel inhibition occurs without any change in steady-state inactivation- and conductance-voltage relationships. On adult mouse DRG neurons, this toxin is approximately 1000-fold more efficient to inhibit tetrodotoxin (TTX)-sensitive than TTX-resistant sodium currents. In vivo, this toxin exhibits analgesic effects in mice pain models. In Omothymus schioedtei (Malaysian earth tiger tarantula), this protein is Mu-theraphotoxin-Os1a.